A 413-amino-acid chain; its full sequence is Putative acid phosphatase 11 (413 aa).

Residue His-35 is the Nucleophile of the active site. Asp-315 functions as the Proton donor in the catalytic mechanism. Cys-381 and Cys-387 are joined by a disulfide.

It belongs to the histidine acid phosphatase family.

The catalysed reaction is a phosphate monoester + H2O = an alcohol + phosphate. The sequence is that of Putative acid phosphatase 11 (pho-11) from Caenorhabditis elegans.